The sequence spans 1438 residues: Pyochelin synthetase PchE (1438 aa).

One can recognise a Carrier 1 domain in the interval 6 to 85 (DSRTALRDWL…AWLDLLACAD (80 aa)). Residue Ser-46 is modified to O-(pantetheine 4'-phosphoryl)serine. Positions 136 to 442 (RTRDVDPQRL…ARRQGQPRSA (307 aa)) are condensation/cyclization. The interval 563–950 (RAAEAPDADA…GRVDQQVKVR (388 aa)) is adenylation. The Carrier 2 domain occupies 1350–1425 (EPLEAHEQAL…GLARHLQAQT (76 aa)). The residue at position 1385 (Ser-1385) is an O-(pantetheine 4'-phosphoryl)serine.

It belongs to the NRP synthetase family. It depends on pantetheine 4'-phosphate as a cofactor.

It carries out the reaction holo-[peptidyl-carrier protein] + L-cysteine + ATP = L-cysteinyl-[peptidyl-carrier protein] + AMP + diphosphate. The protein operates within siderophore biosynthesis. Its pathway is antifungal biosynthesis. In terms of biological role, involved in the biosynthesis of the siderophore pyochelin. Accepts salicylate activated by PchD at the first peptidyl carrier domain (ArCP), and activates and fixes one molecule of cysteine at the second peptidyl carrier domain (PCP1) via a thioester linkage to the phosphopanthetheine moiety. Then catalyzes the condensation reaction between the salicylate bound to the first site and the cysteine bound to the second site, and the cyclization of the cysteine to form the salicyl-thiazolinyl-S-PCP1 intermediate at the second site. When this intermediate is released by the action of a thioesterase, it produces the antifungal antibiotic dihydroaeruginoic acid (Dha or hydroxyphenyl-thiazolinyl-carboxylate). The sequence is that of Pyochelin synthetase PchE from Pseudomonas aeruginosa (strain UCBPP-PA14).